The primary structure comprises 490 residues: Ribulose bisphosphate carboxylase large chain (490 aa).

Substrate contacts are provided by Asn-127 and Thr-177. Lys-179 functions as the Proton acceptor in the catalytic mechanism. Position 181 (Lys-181) interacts with substrate. The Mg(2+) site is built by Lys-205, Asp-207, and Glu-208. Lys-205 is modified (N6-carboxylysine). The active-site Proton acceptor is the His-297. Residues Arg-298, His-330, and Ser-382 each coordinate substrate.

The protein belongs to the RuBisCO large chain family. Type I subfamily. As to quaternary structure, heterohexadecamer of 8 large chains and 8 small chains. Requires Mg(2+) as cofactor.

The protein resides in the plastid. It localises to the chloroplast. The catalysed reaction is 2 (2R)-3-phosphoglycerate + 2 H(+) = D-ribulose 1,5-bisphosphate + CO2 + H2O. The enzyme catalyses D-ribulose 1,5-bisphosphate + O2 = 2-phosphoglycolate + (2R)-3-phosphoglycerate + 2 H(+). Functionally, ruBisCO catalyzes two reactions: the carboxylation of D-ribulose 1,5-bisphosphate, the primary event in carbon dioxide fixation, as well as the oxidative fragmentation of the pentose substrate in the photorespiration process. Both reactions occur simultaneously and in competition at the same active site. The chain is Ribulose bisphosphate carboxylase large chain from Cylindrotheca sp. (strain N1) (Marine diatom).